We begin with the raw amino-acid sequence, 447 residues long: Delta(5) fatty acid desaturase fat-4 (447 aa).

The region spanning 1–80 (MVLREQEHEP…TQEPEIPDIK (80 aa)) is the Cytochrome b5 heme-binding domain. Helical transmembrane passes span 137–157 (IFTILFAFYLQYHTYYLPSAI), 257–277 (WTFMLPFLRLSWLLQSIIFVS), 292–312 (IYEQVGLSLHWAWSLGQLYFL), and 319–339 (IMFFLVSHLVGGFLLSHVVTF).

It belongs to the fatty acid desaturase type 1 family.

It localises to the membrane. It carries out the reaction (11Z,14Z)-eicosadienoyl-CoA + 2 Fe(II)-[cytochrome b5] + O2 + 2 H(+) = (5Z,11Z,14Z)-eicosatrienoyl-CoA + 2 Fe(III)-[cytochrome b5] + 2 H2O. The enzyme catalyses (11Z,14Z,17Z)-eicosatrienoyl-CoA + 2 Fe(II)-[cytochrome b5] + O2 + 2 H(+) = (5Z,11Z,14Z,17Z)-eicosatetraenoyl-CoA + 2 Fe(III)-[cytochrome b5] + 2 H2O. It catalyses the reaction (8Z,11Z,14Z,17Z)-eicosatetraenoyl-CoA + 2 Fe(II)-[cytochrome b5] + O2 + 2 H(+) = (5Z,8Z,11Z,14Z,17Z)-eicosapentaenoyl-CoA + 2 Fe(III)-[cytochrome b5] + 2 H2O. The catalysed reaction is (8Z,11Z,14Z)-eicosatrienoyl-CoA + 2 Fe(II)-[cytochrome b5] + O2 + 2 H(+) = (5Z,8Z,11Z,14Z)-eicosatetraenoyl-CoA + 2 Fe(III)-[cytochrome b5] + 2 H2O. The protein operates within lipid metabolism; polyunsaturated fatty acid biosynthesis. In terms of biological role, can function as a Delta(5) fatty acid desaturase and behaves as a (8-3) desaturase. Introduces a double bond in the fatty acid chain 5 carbons away from carboxy terminal to biosynthesize polyunsaturated fatty acids (PUFAs) endogenously (PUFAs are essential for membrane structure and many cellular and physiological processes). Acts on a variety of substrates such as dihomo-gamma-linoleoyl-CoA ((8Z,11Z,14Z)-eicosatrienoyl-CoA, 20:3n-6) to generate arachidonoyl-CoA ((5Z,8Z,11Z,14Z)-eicosatetraenoyl-CoA, 20:4n-6). Also acts on a number of other substrates, including fatty acids that do not contain a double bond at the 8 position like (11Z,14Z,17Z)-eicosatrienoyl-CoA (20:3n-3) to produce (5Z,11Z,14Z,17Z)-eicosatetraenoyl-CoA (20:4n-3). Unlike plants, Caenorhabditis elegans desaturases seem to use fatty acyl-CoAs as substrates. This Caenorhabditis elegans protein is Delta(5) fatty acid desaturase fat-4 (fat-4).